Reading from the N-terminus, the 401-residue chain is Protein nanos (401 aa).

The segment at 181–207 is disordered; it reads LGRMSYGSAPPQVQMPPQQQHQQQQGL. A compositionally biased stretch (low complexity) spans 190-205; the sequence is PPQVQMPPQQQHQQQQ. A Nanos-type zinc finger spans residues 318–372; that stretch reads HCVFCENNNEPEAVINSHSVRDNFNRVLCPKLRTYVCPICGASGDSAHTIKYCPK. The Zn(2+) site is built by cysteine 319, cysteine 322, histidine 335, cysteine 346, cysteine 354, cysteine 357, histidine 365, and cysteine 370. 2 consecutive short sequence motifs (C2HC) follow at residues 319–346 and 354–370; these read CVFCENNNEPEAVINSHSVRDNFNRVLC and CPICGASGDSAHTIKYC.

It belongs to the nanos family. In terms of assembly, interacts with pum and brat. Interacts with cup. Interacts with mei-P26; possibly involved in regulation of brat levels. Interacts with wh; may be involved in mei-P26-dependent derepression of the BMP signaling pathway. Acts via the formation of a quaternary complex composed of pum, nanos, brat and the 3'-UTR mRNA of hb. Binds RNA with no specificity. In terms of tissue distribution, posterior part of the embryo. While the transcript is present throughout the embryo, nanos translation is controlled by smg, and the protein is found in pole plasm and pole cells. In the female ovary expressed in germline stem cells, precystoblasts and in maturing cystoblasts; in early cystoblasts expression is post-transcriptionally repressed by bam in a 3'UTR-dependent manner.

It is found in the cytoplasm. Its subcellular location is the cytoplasmic ribonucleoprotein granule. Functionally, maternal RNA-binding protein that is required for germ cells proliferation and self-renewal. Acts by forming a complex with pum and brat that regulates translation and mRNA stability. The complex binds to the Nanos Response Element (NRE), a 16 bp sequence in the hb mRNA 3'-UTR and prevents its translation. Controls posterior development. Rescuing factor for the abdominal defect of posterior group mutants. The other posterior group genes are not required for nanos function but rather play a role in localization or distribution of nanos protein. This is Protein nanos from Drosophila melanogaster (Fruit fly).